Reading from the N-terminus, the 1464-residue chain is MSQDDEIVMRDVTSAGICIGDRIGREAASQLDLEEALEASRYASHPYSTHPREWPPLIEVGETWELPSVLIERYNTAGGEGTALCGIFPEIRRAWASVDNSLFLWRFDKRDGQCPEYSGEEQAICAVGLAKCRPGVFVEAIQYLLVLATPVELVLVGVCCTEGPDGRDPYAEISVQPLPDYTISSDGVTMTCVTCTNKGRIFMAGRDGHIYELLYTTGSGWNKRCRKVCLTAGVGSMISRWVVPNVFKFGAVDPVVEMVVDNERQILYARTEEMKLQAYVSGPNGEGPLKKVAEERNLLNQKDLSQGNRQSAVAGRSNKPSIVSISPLSMLESKWLHLVAALSDGRRMYLSTSSSGSGSTISFSGFNNHRQTPNCLKVVSTRPSPPLGVGVGLGFGAASVAGRTQNDDLSMKIETAYYSVGTLVLSDSSPPAMSSLLVVSRDSSVHSQAGSSSGPSSRSSRALREVVSSLPIEGRMLFVADVLPSPDTAATIQSLYSELEYCGVEVSGESYEKACGKLWARSDLSTQHILPRRKIVVFTTMGMMELVFNRPVDILRRLLESNSPRSLLEDFFTRFGVGEAAAMCLMLAARIINFEDLISNIVADKAAEAFEDPRIVGMPQFDGSSGLSNTRTATGGFSMGQVVQEAEPIFSGAHEGLCLCTSRLLFPLWELPVMSKKTSSDTMSEDGVVICRLSTSAMHVLESKIRSLEKFLRSRRNQRRGLYGCVAGLGDVTGSILYGTGSELGATERNMVRNLFGAYSNGGESANKRQRLPYSPAELAATEVRAMECIRQLLLRSAEALFLLQLLSQHHVARLVQELDANLKQALVQLTFHQLVCSEEGDQIATRLISAVMEYYTGSDGRGTVDDISPRLREGCPSYFKESDYKFYLAVERLERAALTSDAEEKENVAREAFSFLSKVPGSADLQTVCKRFEDLRFYEAVVCLPLQKAQALDPAGDAFNDQLDASIREHALAQRKQCYEIIANALRSLASPLASPTLDEASRSQYICQIVHLGVQSTDRAFREYLYKAMIELHLENELLEYGGPDLVPFLQNAGSHSESQVGAVSTGSSPLGHSGTQISSDQAKYFDLLAKYYVSKRQHVLAAHVFLRLAERRAISLGDSPTLERRRDDLSQAVLQAKNASNSDGLVGSAQGVSDSGLLDLLEGKLAVLQFQIKIRDKLEAIASNFESSVAMQDSDQNGQVLDGDSSDDTNLANAANEMAMEVSSELKSVTQLYNEYAVPFELWEICLEMLYFANYSGDADSSIIRETWARLIDQALSQGGIREACAVLKRVGSHIYPGDGVVLPLDVLCLHLERAALERSERIENVRDEDIAKALLAACKGAAEPVLNAYDRLLSNAAVVPSPNLRIRLLRSVLVVLREWAMSVLSDRMGSSPTRSSLILGGSFALENKAALNQGARDKIANAANRYMTEVRRLALPPNKTDGVYAGFKELDESLLSPFSF.

S2 is subject to N-acetylserine.

It belongs to the non-repetitive/WGA-negative nucleoporin family. Part of the nuclear pore complex (NPC). The NPC has an eight-fold symmetrical structure comprising a central transport channel and two rings, the cytoplasmic and nuclear rings, to which eight filaments are attached. The cytoplasmic filaments have loose ends, while the nuclear filaments are joined in a distal ring, forming a nuclear basket. NPCs are highly dynamic in configuration and composition, and can be devided in 3 subcomplexes, the NUP62 subcomplex, the NUP107-160 subcomplex and the NUP93 subcomplex, containing approximately 30 different nucleoporin proteins.

It is found in the nucleus. It localises to the nuclear pore complex. Functionally, major component of the nuclear pore complex (NPC). This chain is Nuclear pore complex protein NUP155, found in Arabidopsis thaliana (Mouse-ear cress).